The primary structure comprises 736 residues: ATP-dependent zinc metalloprotease FtsH (736 aa).

Disordered stretches follow at residues 1 to 39 (MDSNVDSQRVPDGQIFFRPVHPGISGKDMESGTSDGQQR) and 57 to 83 (QQTQNRTGFASADTKQGSPEGADRKKM). Over 1–87 (MDSNVDSQRV…ADRKKMPPGK (87 aa)) the chain is Cytoplasmic. Polar residues predominate over residues 57–73 (QQTQNRTGFASADTKQG). Residues 88–108 (AWLWFVLILIVNFLMVRLLIP) traverse the membrane as a helical segment. Topologically, residues 109–205 (DAEQPVMVPY…KPIHEERSPW (97 aa)) are periplasmic. A helical membrane pass occupies residues 206–226 (ATIVYSFGPGLLFIAFYIWLF). Topologically, residues 227–736 (RRMAQQGGLG…VSLPGVAGPS (510 aa)) are cytoplasmic. 301-308 (GAPGTGKT) serves as a coordination point for ATP. His522 is a Zn(2+) binding site. Residue Glu523 is part of the active site. Residues His526 and Asp598 each contribute to the Zn(2+) site. A disordered region spans residues 706–736 (PALDAGKLPVPDGGDKNAEPSVSLPGVAGPS).

This sequence in the central section; belongs to the AAA ATPase family. It in the C-terminal section; belongs to the peptidase M41 family. In terms of assembly, homohexamer. Zn(2+) serves as cofactor.

The protein localises to the cell inner membrane. Acts as a processive, ATP-dependent zinc metallopeptidase for both cytoplasmic and membrane proteins. Plays a role in the quality control of integral membrane proteins. The polypeptide is ATP-dependent zinc metalloprotease FtsH (Syntrophus aciditrophicus (strain SB)).